Reading from the N-terminus, the 88-residue chain is Small ribosomal subunit protein eS21 (88 aa).

The protein belongs to the eukaryotic ribosomal protein eS21 family. As to quaternary structure, component of the 40S small ribosomal subunit.

It localises to the cytoplasm. The protein localises to the cytosol. The protein resides in the rough endoplasmic reticulum. The protein is Small ribosomal subunit protein eS21 (rps-21) of Caenorhabditis elegans.